The primary structure comprises 207 residues: ATP synthase subunit b 2 (207 aa).

The segment covering 1–31 (MVAQAAPPAGTAGQGTHEAASAAHGAAAAHG) has biased composition (low complexity). Residues 1-41 (MVAQAAPPAGTAGQGTHEAASAAHGAAAAHGAAEEGHGKKS) are disordered. A helical membrane pass occupies residues 48–70 (ATTFASQLLWLVLSFGLLYLLMS).

The protein belongs to the ATPase B chain family. As to quaternary structure, F-type ATPases have 2 components, F(1) - the catalytic core - and F(0) - the membrane proton channel. F(1) has five subunits: alpha(3), beta(3), gamma(1), delta(1), epsilon(1). F(0) has three main subunits: a(1), b(2) and c(10-14). The alpha and beta chains form an alternating ring which encloses part of the gamma chain. F(1) is attached to F(0) by a central stalk formed by the gamma and epsilon chains, while a peripheral stalk is formed by the delta and b chains.

It is found in the cell inner membrane. Functionally, f(1)F(0) ATP synthase produces ATP from ADP in the presence of a proton or sodium gradient. F-type ATPases consist of two structural domains, F(1) containing the extramembraneous catalytic core and F(0) containing the membrane proton channel, linked together by a central stalk and a peripheral stalk. During catalysis, ATP synthesis in the catalytic domain of F(1) is coupled via a rotary mechanism of the central stalk subunits to proton translocation. In terms of biological role, component of the F(0) channel, it forms part of the peripheral stalk, linking F(1) to F(0). This chain is ATP synthase subunit b 2, found in Xanthobacter autotrophicus (strain ATCC BAA-1158 / Py2).